Consider the following 404-residue polypeptide: Cysteine desulfurase IscS (404 aa).

Pyridoxal 5'-phosphate-binding positions include 75-76, Asn-155, Gln-183, and 203-205; these read AT and TGH. Lys-206 bears the N6-(pyridoxal phosphate)lysine mark. Thr-243 contributes to the pyridoxal 5'-phosphate binding site. Cys-328 acts as the Cysteine persulfide intermediate in catalysis. Residue Cys-328 participates in [2Fe-2S] cluster binding.

This sequence belongs to the class-V pyridoxal-phosphate-dependent aminotransferase family. NifS/IscS subfamily. In terms of assembly, homodimer. Forms a heterotetramer with IscU, interacts with other sulfur acceptors. Requires pyridoxal 5'-phosphate as cofactor.

Its subcellular location is the cytoplasm. The enzyme catalyses (sulfur carrier)-H + L-cysteine = (sulfur carrier)-SH + L-alanine. It functions in the pathway cofactor biosynthesis; iron-sulfur cluster biosynthesis. Functionally, master enzyme that delivers sulfur to a number of partners involved in Fe-S cluster assembly, tRNA modification or cofactor biosynthesis. Catalyzes the removal of elemental sulfur atoms from cysteine to produce alanine. Functions as a sulfur delivery protein for Fe-S cluster synthesis onto IscU, an Fe-S scaffold assembly protein, as well as other S acceptor proteins. In Cronobacter sakazakii (strain ATCC BAA-894) (Enterobacter sakazakii), this protein is Cysteine desulfurase IscS.